The chain runs to 1009 residues: MKKKNWIYALIVTLIIIIAIVSMIFFVQTKYGDQSEKGSQSVSNKNNKIHIAIVNEDQPTTYNGKKVELGQAFIKRLANEKNYKFETVTRNVAESGLKNGGYQVMIVIPENFSKLAMQLDAKTPSKISLQYKTAVGQKEEVAKNTEKVVSNVLNDFNKNLVEIYLTSIIDNLHNAQKNVGAIMTREHGVNSKFSNYLLNPINDFPELFTDTLVNSISANKDITKWFQTYNKSLLSANSDTFRVNTDYNVSTLIEKQNSLFDEHNTAMDKMLQDYKSQKDSVELDNYINALKQMDSQIDQQSSMQDTGKEEYKQTVKENLDKLREIIQSQESPFSKGMIEDYRKQLTESLQDELANNKDLQDALNSIKMNNAQFAENLEKQLHDDIVKEPDTDTTFIYNMSKQDFIAAGLNEDEANKYEAIVKEAKRYKNEYNLKKPLAEHINLTDYDNQVAQDTSSLINDGVKVQRTETIKSNDINQLTVATDPHFNFEGDIKINGKKYDIKDQSVQLDTSNKEYKVEVNGVAKLKKDAEKDFLKDKTMHLQLLFGQANRQDEPNDKKATSVVDVTLNHNLDGRLSKDALSQQLSALSRFDAHYKMYTDTKGREDKPFDNKRLIDMMVDQVINDMESFKDDKVAVLHQIDSMEENSDKLIDDILNNKKNTTKNKEDISKLIDQLENVKKTFAEEPQEPKIDKGKNDEFNTMSSNLDKEISRISEKSTQLLSDTQESKSIADSVSGQLNQVDNNVNKLHATGRALGVRANDLNRQMAKNDKDNELFAKEFKKVLQNSKDGDRQNQALKAFMSNPVQKKNLENVLANNGNTDVISPTLFVLLMYLLSMITAYIFYSYERAKGQMNFIKDDYSSKNHLWNNVITSGVIGTTGLVEGLIVGLIAMNKFHVLAGYRAKFILMVILTMMVFVLINTYLLRQVKSIGMFLMIAALGLYFVAMNNLKAAGQGVTNKISPLSYIDNMFFNYLNAEHPIGLVLVILTVLVIIGFVLNMFIKHFKKERLI.

The chain crosses the membrane as a helical span at residues 7–27; sequence IYALIVTLIIIIAIVSMIFFV. The span at 680 to 697 shows a compositional bias: basic and acidic residues; that stretch reads TFAEEPQEPKIDKGKNDE. The interval 680–707 is disordered; it reads TFAEEPQEPKIDKGKNDEFNTMSSNLDK. 5 helical membrane passes run 822–842, 869–889, 903–923, 928–948, and 979–999; these read ISPTLFVLLMYLLSMITAYIF, VITSGVIGTTGLVEGLIVGLI, KFILMVILTMMVFVLINTYLL, SIGMFLMIAALGLYFVAMNNL, and IGLVLVILTVLVIIGFVLNMF.

Belongs to the EsaA family. In terms of assembly, homodimer. Interacts with EssB.

The protein localises to the cell membrane. Its function is as follows. Component of the type VII secretion system (Ess). Provides together with EssB and other components such as EssC and EssE a secretion plateform accross the cytoplasmic membrane in the host. This Staphylococcus aureus (strain USA300) protein is Type VII secretion system accessory factor EsaA.